We begin with the raw amino-acid sequence, 344 residues long: MSTSTAAPAPSLSDLCPAALRRPVAAALRALDPAPARLAVAVSGGADSAMLAVAAAAALPPGCTLRLFHVHHGLQAAADQWAAQVRGLGALLGVPVDEARVTVPPGQGLGMEAAARLARYQALAGLARQHGVRHILLAHHRNDQAETVLLRLLRGTGLQGMAAMAPLSERDGVAYLRPWLDVDRAAILALAGAVRAQCGWQAVQDPTNTDPRYARAAVRTQLAPALDARWPGWQAIVARHARQMAEAAEIVAEVARADFDTLEPADAGRSFSLAAWRGLSAARQAQALRHWLASQDAPMPTEARLAELQRQLRQLHALGHDRHLRWQHAGRVVRCERGRVWIDD.

43 to 48 is an ATP binding site; it reads SGGADS.

It belongs to the tRNA(Ile)-lysidine synthase family.

The protein localises to the cytoplasm. It carries out the reaction cytidine(34) in tRNA(Ile2) + L-lysine + ATP = lysidine(34) in tRNA(Ile2) + AMP + diphosphate + H(+). In terms of biological role, ligates lysine onto the cytidine present at position 34 of the AUA codon-specific tRNA(Ile) that contains the anticodon CAU, in an ATP-dependent manner. Cytidine is converted to lysidine, thus changing the amino acid specificity of the tRNA from methionine to isoleucine. In Bordetella bronchiseptica (strain ATCC BAA-588 / NCTC 13252 / RB50) (Alcaligenes bronchisepticus), this protein is tRNA(Ile)-lysidine synthase.